The following is a 593-amino-acid chain: MLPAHKQTLEALLADSVKQVAHALKGADAATVAPVITLERPKVAAHGDVACNVAMQLAKPLGTNPRQLAEQIVAALTAQPGAQGLVEAAEIAGPGFINLRLSAAAKQAVIAAVFDQGRAFGTSDREKGKQVLLEFVSANPTGPLHVGHGRQAALGDVLANVIASQGYAVHREFYYNDAGVQIGNLAISTQARARGLKPGDAGWPEAAYNGEYIADIARDFLNGETVAASDGEPVKGTGDVEDLDAIRKFAVTYLRREQDMDLQAFGVKFDQYYLESSLYSEGRVEKTVDALIKAGMTYEQDGALWLRTTDEGDDKDRVMRKSDGTYTYFVPDVAYHVTKWERGFTKVINIQGSDHHGTIARVRAGLQGLHIGIPKGYPDYVLHKMVTVMREGQEVKISKRAGSYVTVRDLIEWSGGAAAGQEAAPDLIDEATITRGRDAVRFFLISRKADTEFVFDIDLALKQNDENPVYYVQYAHARICSVLNELKSRYNVDVAQLPGADLSQLTSAQAASLMQKLAEYPDMLTHAANELAPHAVAFYLRDLAGEFHSFYNAERVLVDDEAPRNARAALLAATRQVLENGLAVLGVSAPAKM.

Positions 138–148 match the 'HIGH' region motif; it reads ANPTGPLHVGH.

This sequence belongs to the class-I aminoacyl-tRNA synthetase family. As to quaternary structure, monomer.

The protein resides in the cytoplasm. It catalyses the reaction tRNA(Arg) + L-arginine + ATP = L-arginyl-tRNA(Arg) + AMP + diphosphate. The chain is Arginine--tRNA ligase from Burkholderia lata (strain ATCC 17760 / DSM 23089 / LMG 22485 / NCIMB 9086 / R18194 / 383).